We begin with the raw amino-acid sequence, 252 residues long: NAP1-related protein 2 (252 aa).

Over residues methionine 1–alanine 15 the composition is skewed to basic and acidic residues. The segment at methionine 1–asparagine 23 is disordered. The stretch at isoleucine 26–arginine 67 forms a coiled coil. The segment at tyrosine 222–asparagine 252 is disordered. Positions glutamate 226–asparagine 252 are enriched in acidic residues.

This sequence belongs to the nucleosome assembly protein (NAP) family.

It is found in the nucleus. Its subcellular location is the cytoplasm. Its function is as follows. Acts as a histone H2A/H2B chaperone in nucleosome assembly. The sequence is that of NAP1-related protein 2 from Oryza sativa subsp. indica (Rice).